A 243-amino-acid polypeptide reads, in one-letter code: Probable transcriptional regulator ycf27 (243 aa).

A Response regulatory domain is found at 7-120 (KILVVDDEAS…ELEARIRSVL (114 aa)). Asp-56 carries the post-translational modification 4-aspartylphosphate. Residues 76 to 94 (DVPIIMLTALGEVCDRITG) constitute a DNA-binding region (H-T-H motif). Residues 135–236 (SGIISIGFLK…ARGTGYLFQR (102 aa)) constitute a DNA-binding region (ompR/PhoB-type).

It is found in the plastid. The protein localises to the chloroplast. Probable promoter-specific protein mediating the interaction between DNA and RNA polymerase. This is Probable transcriptional regulator ycf27 (ycf27) from Porphyra purpurea (Red seaweed).